Here is a 709-residue protein sequence, read N- to C-terminus: Myotubularin-related protein 11 (709 aa).

The interval 1 to 39 (MWWGGRGQSFNIAPQKEEPEMGSVQENRMPEPRSRQPSS) is disordered. One can recognise a Myotubularin phosphatase domain in the interval 196–639 (METAEDWETE…PQIRLWRRCY (444 aa)).

The protein belongs to the protein-tyrosine phosphatase family. Non-receptor class myotubularin subfamily. Expressed in bone marrow, spleen and thymus.

The protein is Myotubularin-related protein 11 (MTMR11) of Homo sapiens (Human).